A 109-amino-acid chain; its full sequence is Putative double-stranded DNA mimic protein YciU (109 aa).

The protein belongs to the putative dsDNA mimic protein family.

Its function is as follows. May act as a double-stranded DNA (dsDNA) mimic. Probably regulates the activity of a dsDNA-binding protein. This chain is Putative double-stranded DNA mimic protein YciU, found in Shigella flexneri.